A 189-amino-acid polypeptide reads, in one-letter code: Methylated-DNA--protein-cysteine methyltransferase (189 aa).

2 residues coordinate DNA: Tyr-128 and Arg-142. Cys-159 serves as the catalytic Nucleophile; methyl group acceptor. Ser-165 provides a ligand contact to DNA.

This sequence belongs to the MGMT family.

It is found in the nucleus. It catalyses the reaction a 6-O-methyl-2'-deoxyguanosine in DNA + L-cysteinyl-[protein] = S-methyl-L-cysteinyl-[protein] + a 2'-deoxyguanosine in DNA. It carries out the reaction a 4-O-methyl-thymidine in DNA + L-cysteinyl-[protein] = a thymidine in DNA + S-methyl-L-cysteinyl-[protein]. Functionally, involved in the cellular defense against the biological effects of O6-methylguanine (O6-MeG) and O4-methylthymine (O4-MeT) in DNA. Repairs the methylated nucleobase in DNA by stoichiometrically transferring the methyl group to a cysteine residue in the enzyme. This is a suicide reaction: the enzyme is irreversibly inactivated. The sequence is that of Methylated-DNA--protein-cysteine methyltransferase (MGT1) from Kluyveromyces lactis (strain ATCC 8585 / CBS 2359 / DSM 70799 / NBRC 1267 / NRRL Y-1140 / WM37) (Yeast).